The primary structure comprises 449 residues: Phosphoribosylamine--glycine ligase (449 aa).

The ATP-grasp domain maps to 112–325 (RELMEKYDIP…IVTLHASIAE (214 aa)). Residue 139–202 (IDELGKPVAV…EEKCVGEEYT (64 aa)) coordinates ATP. Mg(2+)-binding residues include Q283, E295, and N297. Mn(2+) is bound by residues Q283, E295, and N297.

Belongs to the GARS family. Mg(2+) serves as cofactor. Mn(2+) is required as a cofactor.

It carries out the reaction 5-phospho-beta-D-ribosylamine + glycine + ATP = N(1)-(5-phospho-beta-D-ribosyl)glycinamide + ADP + phosphate + H(+). It functions in the pathway purine metabolism; IMP biosynthesis via de novo pathway; N(1)-(5-phospho-D-ribosyl)glycinamide from 5-phospho-alpha-D-ribose 1-diphosphate: step 2/2. This is Phosphoribosylamine--glycine ligase from Methanopyrus kandleri (strain AV19 / DSM 6324 / JCM 9639 / NBRC 100938).